Consider the following 1614-residue polypeptide: Low-density lipoprotein receptor-related protein 5 (1614 aa).

The N-terminal stretch at 1 to 30 (METAPTRAPPPPPPPLLLLVLYCSLVPAAA) is a signal peptide. A beta-propeller 1 region spans residues 31 to 287 (SPLLLFANRR…YSPMDIQVLS (257 aa)). At 31-1383 (SPLLLFANRR…PPSDDIPAHS (1353 aa)) the chain is on the extracellular side. LDL-receptor class B repeat units lie at residues 74–118 (GAVY…DWVG), 119–161 (KKLY…DPAH), 162–205 (GYMY…DLEE), 206–246 (QKLY…TLSG), and 247–289 (DTLY…LSQE). Residues N92 and N137 are each glycosylated (N-linked (GlcNAc...) asparagine). An EGF-like 1 domain is found at 294 to 336 (FHTPCEEDNGGCSHLCLLSPREPFYSCACPTGVQLQDNGKTCK). Intrachain disulfides connect C298–C309, C305–C320, and C322–C335. The beta-propeller 2 stretch occupies residues 340-601 (EEVLLLARRT…AVNVAKVVGT (262 aa)). 5 LDL-receptor class B repeats span residues 384–426 (GYVY…DWVA), 427–469 (RNLY…HPVM), 470–513 (GLMY…DLQE), 514–556 (GKLY…LGDF), and 557–599 (IYWT…AKVV). 2 N-linked (GlcNAc...) asparagine glycosylation sites follow: N445 and N498. An EGF-like 2 domain is found at 600-640 (GTNPCADGNGGCSHLCFFTPRATKCGCPIGLELLSDMKTCI). 3 disulfides stabilise this stretch: C604-C615, C611-C624, and C626-C639. The tract at residues 643-902 (EAFLVFTSRA…VFHSSRQDGL (260 aa)) is beta-propeller 3. 5 LDL-receptor class B repeats span residues 686–728 (NHIY…DWMG), 729–771 (KNLY…DPTK), 772–814 (GYIY…DYAD), 815–854 (QRLY…TQYS), and 855–897 (DYIY…FHSS). Residue N704 is glycosylated (N-linked (GlcNAc...) asparagine). N877 is a glycosylation site (N-linked (GlcNAc...) asparagine). One can recognise an EGF-like 3 domain in the interval 901–941 (GLNDCVHSNGQCGQLCLAIPGGHRCGCASHYTLDPSSRNCS). 3 disulfides stabilise this stretch: C905/C916, C912/C925, and C927/C940. A beta-propeller 4 region spans residues 944–1211 (STFLLFSQKF…AVEEVSLEEF (268 aa)). LDL-receptor class B repeat units follow at residues 988–1034 (KFIY…DIYS), 1035–1077 (RTLF…NAER), 1078–1122 (GYMY…DNAL), 1123–1164 (GKLF…VLGR), and 1165–1206 (HLYW…VEEV). The tract at residues 1002–1025 (AKDDGTQPSMLTSPSQSLSPDRQP) is disordered. Residues 1007–1021 (TQPSMLTSPSQSLSP) are compositionally biased toward polar residues. The EGF-like 4 domain maps to 1212-1253 (SAHPCARDNGGCSHICIAKGDGTPRCSCPVHLVLLQNLLTCG). 12 disulfide bridges follow: C1216–C1227, C1223–C1237, C1239–C1252, C1258–C1272, C1265–C1285, C1279–C1294, C1297–C1309, C1304–C1322, C1316–C1331, C1335–C1347, C1342–C1360, and C1354–C1369. LDL-receptor class A domains are found at residues 1257–1295 (TCSP…EGCP), 1296–1332 (VCSA…ANCD), and 1334–1370 (VCLP…LMCE). A helical membrane pass occupies residues 1384–1406 (SAIGPVIGIILSLFVMGGVYFVC). Over 1407–1614 (QRVMCQRYTG…PPPSPCTDSS (208 aa)) the chain is Cytoplasmic. Residues 1474–1498 (RNHVTGASSSSSSSTKATLYPPILN) are disordered. The short motif at 1499–1505 (PPPSPAT) is the PPPSP motif A element. A PPPSP motif B motif is present at residues 1537–1544 (PPTTPCST). The disordered stretch occupies residues 1567–1599 (SDSDPYPPPPTPHSQYLSAEDSCPPSPGTERSY). The PPPSP motif C signature appears at 1573-1580 (PPPPTPHS). The PPPSP motif D signature appears at 1590-1595 (PPSPGT). The PPPSP motif E signature appears at 1604–1611 (PPPPSPCT).

The protein belongs to the LDLR family. Homodimer; disulfide-linked. Forms phosphorylated oligomer aggregates on Wnt-signaling. Component of a WNT-signaling complex that contains a WNT protein, a FZD protein and LRP5 or LRP6. Interacts with FZD8; the interaction is formed on WNT-binding and signaling. Interacts (via the phosphorylated PPPSP motif domains) with AXIN1; the interaction prevents inhibition of beta-catenin phosphorylation and signaling and is enhanced in the presence of GSK3B and WNT1 or WNT3A. Interacts (via beta-propeller regions 3 and 4) with DKK1; the interaction, enhanced by MESD and/or KREMEN, inhibits beta-catenin signaling by preventing GSK3-mediated phosphorylation of the PPPSP motifs and subsequent, AXIN1 binding. Interacts with CSNK1E. Interacts with SOST; the interaction antagonizes canonical Wnt signaling. Interacts with APCDD1. Interacts with MESD; the interaction prevents the formation of LRP5 aggregates, targets LRP5 to the plasma membrane and, when complexed with KREMEN2, increases DKK1 binding. Interacts with CAPRIN2. Post-translationally, phosphorylation of cytoplasmic PPPSP motifs regulates the signal transduction of the Wnt signaling pathway through acting as a docking site for AXIN1. As to expression, widely expressed, with the highest expression levels in liver, heart, and lung and the lowest levels in brain and spleen.

The protein localises to the membrane. It is found in the endoplasmic reticulum. In terms of biological role, acts as a coreceptor with members of the frizzled family of seven-transmembrane spanning receptors to transduce signal by Wnt proteins. Activates the canonical Wnt signaling pathway that controls cell fate determination and self-renewal during embryonic development and adult tissue regeneration. In particular, may play an important role in the development of the posterior patterning of the epiblast during gastrulation. During bone development, regulates osteoblast proliferation and differentiation thus determining bone mass. Mechanistically, the formation of the signaling complex between Wnt ligand, frizzled receptor and LRP5 coreceptor promotes the recruitment of AXIN1 to LRP5, stabilizing beta-catenin/CTNNB1 and activating TCF/LEF-mediated transcriptional programs. Acts as a coreceptor for non-Wnt proteins, such as norrin/NDP. Binding of norrin/NDP to frizzled 4/FZD4-LRP5 receptor complex triggers beta-catenin/CTNNB1-dependent signaling known to be required for retinal vascular development. Plays a role in controlling postnatal vascular regression in retina via macrophage-induced endothelial cell apoptosis. The polypeptide is Low-density lipoprotein receptor-related protein 5 (Mus musculus (Mouse)).